The chain runs to 694 residues: Elongation factor G (694 aa).

Residues 8–285 (EKVRNIGIAA…AVVELLPSPQ (278 aa)) enclose the tr-type G domain. Residues 17 to 24 (AHIDAGKT), 81 to 85 (DTPGH), and 135 to 138 (NKMD) each bind GTP.

The protein belongs to the TRAFAC class translation factor GTPase superfamily. Classic translation factor GTPase family. EF-G/EF-2 subfamily.

The protein localises to the cytoplasm. Catalyzes the GTP-dependent ribosomal translocation step during translation elongation. During this step, the ribosome changes from the pre-translocational (PRE) to the post-translocational (POST) state as the newly formed A-site-bound peptidyl-tRNA and P-site-bound deacylated tRNA move to the P and E sites, respectively. Catalyzes the coordinated movement of the two tRNA molecules, the mRNA and conformational changes in the ribosome. This Synechococcus sp. (strain ATCC 27144 / PCC 6301 / SAUG 1402/1) (Anacystis nidulans) protein is Elongation factor G (fusA).